A 166-amino-acid chain; its full sequence is Peroxynitrite isomerase Rv2717c (166 aa).

A GXWXGXG motif is present at residues 28 to 34; it reads GTWRGQG. The heme b site is built by Thr40 and His158.

It belongs to the nitrobindin family. As to quaternary structure, homodimer. It depends on heme b as a cofactor.

It localises to the cytoplasm. The catalysed reaction is peroxynitrite = nitrate. The protein operates within nitrogen metabolism. Its function is as follows. Heme-binding protein able to scavenge peroxynitrite and to protect free L-tyrosine against peroxynitrite-mediated nitration, by acting as a peroxynitrite isomerase that converts peroxynitrite to nitrate. Therefore, this protein likely plays a role in peroxynitrite sensing and in the detoxification of reactive nitrogen and oxygen species (RNS and ROS, respectively). Is able to bind nitric oxide (NO) in vitro, but may act as a sensor of peroxynitrite levels in vivo. The protein is Peroxynitrite isomerase Rv2717c of Arabidopsis thaliana (Mouse-ear cress).